Here is a 159-residue protein sequence, read N- to C-terminus: uncharacterized protein (159 aa).

Belongs to the mimivirus L15/L51/R83 family.

This is an uncharacterized protein from Acanthamoeba polyphaga mimivirus (APMV).